The following is a 315-amino-acid chain: 4-hydroxy-3-methylbut-2-enyl diphosphate reductase (315 aa).

C12 is a [4Fe-4S] cluster binding site. (2E)-4-hydroxy-3-methylbut-2-enyl diphosphate is bound by residues H43 and H81. Dimethylallyl diphosphate-binding residues include H43 and H81. Isopentenyl diphosphate is bound by residues H43 and H81. C103 contacts [4Fe-4S] cluster. H131 contributes to the (2E)-4-hydroxy-3-methylbut-2-enyl diphosphate binding site. Position 131 (H131) interacts with dimethylallyl diphosphate. H131 contributes to the isopentenyl diphosphate binding site. E133 functions as the Proton donor in the catalytic mechanism. T170 is a (2E)-4-hydroxy-3-methylbut-2-enyl diphosphate binding site. C198 is a [4Fe-4S] cluster binding site. (2E)-4-hydroxy-3-methylbut-2-enyl diphosphate contacts are provided by S226, N228, and S271. Dimethylallyl diphosphate-binding residues include S226, N228, and S271. Residues S226, N228, and S271 each coordinate isopentenyl diphosphate.

This sequence belongs to the IspH family. Requires [4Fe-4S] cluster as cofactor.

The catalysed reaction is isopentenyl diphosphate + 2 oxidized [2Fe-2S]-[ferredoxin] + H2O = (2E)-4-hydroxy-3-methylbut-2-enyl diphosphate + 2 reduced [2Fe-2S]-[ferredoxin] + 2 H(+). It catalyses the reaction dimethylallyl diphosphate + 2 oxidized [2Fe-2S]-[ferredoxin] + H2O = (2E)-4-hydroxy-3-methylbut-2-enyl diphosphate + 2 reduced [2Fe-2S]-[ferredoxin] + 2 H(+). It participates in isoprenoid biosynthesis; dimethylallyl diphosphate biosynthesis; dimethylallyl diphosphate from (2E)-4-hydroxy-3-methylbutenyl diphosphate: step 1/1. The protein operates within isoprenoid biosynthesis; isopentenyl diphosphate biosynthesis via DXP pathway; isopentenyl diphosphate from 1-deoxy-D-xylulose 5-phosphate: step 6/6. Catalyzes the conversion of 1-hydroxy-2-methyl-2-(E)-butenyl 4-diphosphate (HMBPP) into a mixture of isopentenyl diphosphate (IPP) and dimethylallyl diphosphate (DMAPP). Acts in the terminal step of the DOXP/MEP pathway for isoprenoid precursor biosynthesis. In Anoxybacillus flavithermus (strain DSM 21510 / WK1), this protein is 4-hydroxy-3-methylbut-2-enyl diphosphate reductase.